The sequence spans 71 residues: ATP synthase subunit c (71 aa).

The next 2 membrane-spanning stretches (helical) occupy residues 4–24 (AVIG…GIGI) and 48–68 (IIGA…AFMI).

The protein belongs to the ATPase C chain family. As to quaternary structure, F-type ATPases have 2 components, F(1) - the catalytic core - and F(0) - the membrane proton channel. F(1) has five subunits: alpha(3), beta(3), gamma(1), delta(1), epsilon(1). F(0) has three main subunits: a(1), b(2) and c(10-14). The alpha and beta chains form an alternating ring which encloses part of the gamma chain. F(1) is attached to F(0) by a central stalk formed by the gamma and epsilon chains, while a peripheral stalk is formed by the delta and b chains.

The protein localises to the cell membrane. In terms of biological role, f(1)F(0) ATP synthase produces ATP from ADP in the presence of a proton or sodium gradient. F-type ATPases consist of two structural domains, F(1) containing the extramembraneous catalytic core and F(0) containing the membrane proton channel, linked together by a central stalk and a peripheral stalk. During catalysis, ATP synthesis in the catalytic domain of F(1) is coupled via a rotary mechanism of the central stalk subunits to proton translocation. Its function is as follows. Key component of the F(0) channel; it plays a direct role in translocation across the membrane. A homomeric c-ring of between 10-14 subunits forms the central stalk rotor element with the F(1) delta and epsilon subunits. In Clostridium botulinum (strain Alaska E43 / Type E3), this protein is ATP synthase subunit c.